A 377-amino-acid chain; its full sequence is Chaperone protein DnaJ (377 aa).

Residues 5–70 (DYYQVLGVSR…KKRSAYDQLG (66 aa)) form the J domain. The CR-type zinc-finger motif lies at 138–216 (GVTKIISFKT…CYGEGRYINT (79 aa)). Cysteine 151, cysteine 154, cysteine 168, cysteine 171, cysteine 190, cysteine 193, cysteine 204, and cysteine 207 together coordinate Zn(2+). 4 CXXCXGXG motif repeats span residues 151–158 (CDACAGKG), 168–175 (CPTCRGSG), 190–197 (CQTCRGAG), and 204–211 (CTKCYGEG).

It belongs to the DnaJ family. In terms of assembly, homodimer. The cofactor is Zn(2+).

It is found in the cytoplasm. In terms of biological role, participates actively in the response to hyperosmotic and heat shock by preventing the aggregation of stress-denatured proteins and by disaggregating proteins, also in an autonomous, DnaK-independent fashion. Unfolded proteins bind initially to DnaJ; upon interaction with the DnaJ-bound protein, DnaK hydrolyzes its bound ATP, resulting in the formation of a stable complex. GrpE releases ADP from DnaK; ATP binding to DnaK triggers the release of the substrate protein, thus completing the reaction cycle. Several rounds of ATP-dependent interactions between DnaJ, DnaK and GrpE are required for fully efficient folding. Also involved, together with DnaK and GrpE, in the DNA replication of plasmids through activation of initiation proteins. This Orientia tsutsugamushi (strain Boryong) (Rickettsia tsutsugamushi) protein is Chaperone protein DnaJ.